Consider the following 434-residue polypeptide: 5-methylthioadenosine/S-adenosylhomocysteine deaminase (434 aa).

H66 and H68 together coordinate Zn(2+). Substrate-binding residues include E95, R148, and H188. Residue H215 coordinates Zn(2+). Substrate contacts are provided by E218 and D304. D304 is a Zn(2+) binding site.

The protein belongs to the metallo-dependent hydrolases superfamily. MTA/SAH deaminase family. Zn(2+) serves as cofactor.

The catalysed reaction is S-adenosyl-L-homocysteine + H2O + H(+) = S-inosyl-L-homocysteine + NH4(+). It catalyses the reaction S-methyl-5'-thioadenosine + H2O + H(+) = S-methyl-5'-thioinosine + NH4(+). Its function is as follows. Catalyzes the deamination of 5-methylthioadenosine and S-adenosyl-L-homocysteine into 5-methylthioinosine and S-inosyl-L-homocysteine, respectively. Is also able to deaminate adenosine. This is 5-methylthioadenosine/S-adenosylhomocysteine deaminase from Shouchella clausii (strain KSM-K16) (Alkalihalobacillus clausii).